The following is a 189-amino-acid chain: HTH-type transcriptional regulator Hpr (189 aa).

One can recognise an HTH marR-type domain in the interval 12-156; it reads ALLYSHKIVQ…ISAIVRRLYG (145 aa). The H-T-H motif DNA-binding region spans 62 to 85; the sequence is ISEIAKYGVMHVSTAFNFSKKLED.

Homodimer.

In terms of biological role, negative regulator of protease production and sporulation. The protein is HTH-type transcriptional regulator Hpr of Exiguobacterium sibiricum (strain DSM 17290 / CCUG 55495 / CIP 109462 / JCM 13490 / 255-15).